The chain runs to 140 residues: Transcriptional regulator YdaT (140 aa).

Transcriptional regulator that causes a severe detrimental growth effect and reduces cell viability. When expressed, it alters expression of a variety of bacterial regulons normally controlled by the transcriptional regulatory protein RcsA, resulting in deficient lipopolysaccharide biosynthesis and cell division. YdaT has no effect on Rac prophage excision. Overexpression of ydaST reduces growth and leads to loss of cell viability. May contribute to toxicity and morphological defects. The chain is Transcriptional regulator YdaT (ydaT) from Escherichia coli (strain K12).